We begin with the raw amino-acid sequence, 466 residues long: Cysteine--tRNA ligase (466 aa).

Cysteine 28 is a binding site for Zn(2+). Positions 30–40 (PTVYNYIHIGN) match the 'HIGH' region motif. 3 residues coordinate Zn(2+): cysteine 208, histidine 233, and glutamate 237. A 'KMSKS' region motif is present at residues 265–269 (KMSKS). Position 268 (lysine 268) interacts with ATP.

The protein belongs to the class-I aminoacyl-tRNA synthetase family. In terms of assembly, monomer. Zn(2+) is required as a cofactor.

It is found in the cytoplasm. It catalyses the reaction tRNA(Cys) + L-cysteine + ATP = L-cysteinyl-tRNA(Cys) + AMP + diphosphate. The polypeptide is Cysteine--tRNA ligase (Staphylococcus aureus (strain MRSA252)).